Here is a 176-residue protein sequence, read N- to C-terminus: MKFLFDLFPIILFFVAFKIWGIFTATAVAIVATLVQIAWVAFRHRKVDPMLWVSLGVVTVFGGATLVLHNDTFIKWKPTVLYWAFSVALIVSQLAFNKNLIEAMMGKQITLPHAIWGKLNVVWGVFFVLLGLVNLFVAYNYTTDQWVNFKLFGATGCLVVFIVGQSLWLSKYMKEE.

The next 5 helical transmembrane spans lie at threonine 24 to histidine 44, proline 49 to histidine 69, tryptophan 76 to phenylalanine 96, leucine 119 to tyrosine 139, and phenylalanine 149 to leucine 169.

This sequence belongs to the YciB family.

The protein resides in the cell inner membrane. Its function is as follows. Plays a role in cell envelope biogenesis, maintenance of cell envelope integrity and membrane homeostasis. This chain is Inner membrane-spanning protein YciB, found in Paraburkholderia xenovorans (strain LB400).